Reading from the N-terminus, the 476-residue chain is Bifunctional protein HldE (476 aa).

Positions 1 to 319 (MKVSLPAFEK…EALALHHGES (319 aa)) are ribokinase. 195–198 (NMSE) contributes to the ATP binding site. Asp264 is an active-site residue. The segment at 345–476 (MTNGCFDILH…AIIQNIMANQ (132 aa)) is cytidylyltransferase.

In the N-terminal section; belongs to the carbohydrate kinase PfkB family. It in the C-terminal section; belongs to the cytidylyltransferase family. As to quaternary structure, homodimer.

It catalyses the reaction D-glycero-beta-D-manno-heptose 7-phosphate + ATP = D-glycero-beta-D-manno-heptose 1,7-bisphosphate + ADP + H(+). The catalysed reaction is D-glycero-beta-D-manno-heptose 1-phosphate + ATP + H(+) = ADP-D-glycero-beta-D-manno-heptose + diphosphate. It participates in nucleotide-sugar biosynthesis; ADP-L-glycero-beta-D-manno-heptose biosynthesis; ADP-L-glycero-beta-D-manno-heptose from D-glycero-beta-D-manno-heptose 7-phosphate: step 1/4. The protein operates within nucleotide-sugar biosynthesis; ADP-L-glycero-beta-D-manno-heptose biosynthesis; ADP-L-glycero-beta-D-manno-heptose from D-glycero-beta-D-manno-heptose 7-phosphate: step 3/4. Its function is as follows. Catalyzes the phosphorylation of D-glycero-D-manno-heptose 7-phosphate at the C-1 position to selectively form D-glycero-beta-D-manno-heptose-1,7-bisphosphate. Catalyzes the ADP transfer from ATP to D-glycero-beta-D-manno-heptose 1-phosphate, yielding ADP-D-glycero-beta-D-manno-heptose. The sequence is that of Bifunctional protein HldE from Shewanella baltica (strain OS195).